A 188-amino-acid chain; its full sequence is Xanthine phosphoribosyltransferase (188 aa).

L20 and N27 together coordinate xanthine. 127–131 (ANGNA) lines the 5-phospho-alpha-D-ribose 1-diphosphate pocket. K155 serves as a coordination point for xanthine.

It belongs to the purine/pyrimidine phosphoribosyltransferase family. Xpt subfamily. Homodimer.

It localises to the cytoplasm. The enzyme catalyses XMP + diphosphate = xanthine + 5-phospho-alpha-D-ribose 1-diphosphate. It participates in purine metabolism; XMP biosynthesis via salvage pathway; XMP from xanthine: step 1/1. In terms of biological role, converts the preformed base xanthine, a product of nucleic acid breakdown, to xanthosine 5'-monophosphate (XMP), so it can be reused for RNA or DNA synthesis. The polypeptide is Xanthine phosphoribosyltransferase (Phocaeicola vulgatus (strain ATCC 8482 / DSM 1447 / JCM 5826 / CCUG 4940 / NBRC 14291 / NCTC 11154) (Bacteroides vulgatus)).